The sequence spans 314 residues: MEDSNSHPQNQTSKRKSSHPQKKQRMENETRSAKLLDLDVLDCPVCFEPLTIPTFQCDDGHIVCNFCFAKVSNKCPGPGCDLPIGNKRCFAMERVLESAFVPCQNTEFGCTKSVSYEKVSSHEKECNYSQCSCPNLECNYTGSYNIIYGHFMRRHLYNSTIVSSKWGYSTVDVLINIKEKVSVLWESRQKLLFVVQCFKERHGVYVTVRRIAPPASEFKKFSYRLSYSIDGHNVTYESPEVKRLLEVNSQIPDDSFMFVPNCLLHGFLIKPANEVQQVTIAQETVMEDPPTSLFKNSVPIREDQIQNAITNSIR.

A compositionally biased stretch (polar residues) spans 1 to 12 (MEDSNSHPQNQT). The segment at 1 to 31 (MEDSNSHPQNQTSKRKSSHPQKKQRMENETR) is disordered. Residues 13-23 (SKRKSSHPQKK) show a composition bias toward basic residues. The RING-type; degenerate zinc finger occupies 43-81 (CPVCFEPLTIPTFQCDDGHIVCNFCFAKVSNKCPGPGCD). The SBD stretch occupies residues 95 to 280 (VLESAFVPCQ…PANEVQQVTI (186 aa)). The SIAH-type zinc-finger motif lies at 98–156 (SAFVPCQNTEFGCTKSVSYEKVSSHEKECNYSQCSCPNLECNYTGSYNIIYGHFMRRHL). Zn(2+) contacts are provided by Cys103, Cys110, His122, Cys126, Cys133, Cys138, His150, and His155.

The protein belongs to the SINA (Seven in absentia) family.

The catalysed reaction is S-ubiquitinyl-[E2 ubiquitin-conjugating enzyme]-L-cysteine + [acceptor protein]-L-lysine = [E2 ubiquitin-conjugating enzyme]-L-cysteine + N(6)-ubiquitinyl-[acceptor protein]-L-lysine.. It participates in protein modification; protein ubiquitination. Its function is as follows. E3 ubiquitin-protein ligase that mediates ubiquitination and subsequent proteasomal degradation of target proteins. E3 ubiquitin ligases accept ubiquitin from an E2 ubiquitin-conjugating enzyme in the form of a thioester and then directly transfers the ubiquitin to targeted substrates. It probably triggers the ubiquitin-mediated degradation of different substrates. This is E3 ubiquitin-protein ligase SINA-like 11 from Arabidopsis thaliana (Mouse-ear cress).